The chain runs to 883 residues: Lysine-specific demethylase JMJ29 (883 aa).

2 disordered regions span residues 30 to 62 (KPFM…SAVK) and 161 to 204 (RTHS…SRKQ). Low complexity predominate over residues 34–43 (SKGSSPSSSS). 2 stretches are compositionally biased toward polar residues: residues 161 to 172 (RTHSLSANSPEN) and 184 to 204 (SPAS…SRKQ). Positions 209, 212, 223, 226, 232, 235, 252, 255, 338, 341, 363, and 381 each coordinate Zn(2+). An RING-type; degenerate zinc finger spans residues 209–256 (CHQCLKGERITLLICSECEKTMFCLQCIRKWYPNLSEDDVVEKCPLCR). A B box-type; atypical zinc finger spans residues 333-392 (DERVYCDHCATSIVDLHRSCPKCSYELCLKCCQEIREGSLSERPEMKFHYVDRGHRYMHG). In terms of domain architecture, JmjC spans 632–863 (PRTGILNIAT…ECLRLTEEFR (232 aa)). His-676 and Asp-678 together coordinate Fe cation. A disordered region spans residues 713–743 (NKVDKQSTEDCNEKEEEEEEELNMPEISSNE). Residues 722–735 (DCNEKEEEEEEELN) show a composition bias toward acidic residues. The Nuclear localization signal signature appears at 755-762 (FRREDVPK). His-831 lines the Fe cation pocket.

It belongs to the JARID1 histone demethylase family. It depends on Fe(2+) as a cofactor. In terms of tissue distribution, expressed in inflorescences, roots, siliques, leaves and stems.

It localises to the nucleus. Functionally, may function as histone H3 lysine demethylase and be involved in regulation of gene expression. The chain is Lysine-specific demethylase JMJ29 from Arabidopsis thaliana (Mouse-ear cress).